Here is a 393-residue protein sequence, read N- to C-terminus: NAD(P)H-quinone oxidoreductase subunit H, chloroplastic (393 aa).

The protein belongs to the complex I 49 kDa subunit family. In terms of assembly, NDH is composed of at least 16 different subunits, 5 of which are encoded in the nucleus.

The protein localises to the plastid. It is found in the chloroplast thylakoid membrane. It carries out the reaction a plastoquinone + NADH + (n+1) H(+)(in) = a plastoquinol + NAD(+) + n H(+)(out). It catalyses the reaction a plastoquinone + NADPH + (n+1) H(+)(in) = a plastoquinol + NADP(+) + n H(+)(out). Functionally, NDH shuttles electrons from NAD(P)H:plastoquinone, via FMN and iron-sulfur (Fe-S) centers, to quinones in the photosynthetic chain and possibly in a chloroplast respiratory chain. The immediate electron acceptor for the enzyme in this species is believed to be plastoquinone. Couples the redox reaction to proton translocation, and thus conserves the redox energy in a proton gradient. In Vitis vinifera (Grape), this protein is NAD(P)H-quinone oxidoreductase subunit H, chloroplastic.